The following is an 892-amino-acid chain: MSSRGGGVGGRRGGPGGASSVRGGERGRKRGRGALDAVEPRVPLPRGTGSGPGAGRDGAAAPVPALQPAEADVLSGEVETEMAAGMEAREGASSSSSASAPAVGEVEPPSRAVGALPPTSSKAVVLQARPGFGTVGTSCRVRANHFVVQLADKEIYHYDVAIAPELRSRERNRNIINELLRSHKKYLDGRRSPAYDGRKGMFTAGALPFTDREFVVKIANDPERGNQGEKEFKVTIKCAGAANLYMHSLKQFLAGTYPSQDRFSHKHLDIRILIVALNGGEDISATTFYKAQPVIDFALDYLNMNIRDAYSRFDQDGTRVSVVQYFNRQYSYSLKYINWPCLQAGSDSRPTYLPMEVCRIVKGQRYSRKLNECQVTRMLRLARETPEERENSILEIANENNYGNDYHAREFGIGVTNQLALVDARVLPAPMLKYHDSGQEKVCNPSIGQWNMNNKRMLNGGSINYWACLTFASCVRLAEVRTFCKELVRVCNSIGMQITGEPCVRIRQERQDHLDAAVRDIHRQSAEFLSQQGVIGQQLELLVIVLPDANATVFYGRIKRLCETELGVITQCCLARNVQNVGGRNTVLEDALHRRIPLLTDMPTMIFGADVTHPPAGEDSSPSIAAVVASMDWPEVSKYKCSVSSQSHREEIIADLFTEVKDSQNRLVYGGMIRELIESFRKANGSYKPGRIIFYRDGVSEGQFSQVLLSEMDAIRKACASIEEGYLPPVTFVVVQKRHHTRLFPEDHHARDQMDRSRNILPGTVVDTKICHPSEFDFYLCSHSGIQGTSHPTHYYVLFDENNFSADALQTLTYHLCYTYARCTRSVSIVPPVYYAHLAASRARHYLEEGSLPDHGSSSASAAGGSRRNDRGVPVKPLPEIKENVKQFMFYC.

Residues Met1–Gly17 are compositionally biased toward gly residues. Disordered regions lie at residues Met1–Pro68 and Met86–Pro117. A compositionally biased stretch (low complexity) spans Met86–Glu107. The region spanning Ser248 to Lys362 is the PAZ domain. Positions Leu541–Glu848 constitute a Piwi domain. The disordered stretch occupies residues Gly850–Lys876. The span at Gly856–Ser866 shows a compositional bias: low complexity. Residues Arg867–Lys876 are compositionally biased toward basic and acidic residues.

This sequence belongs to the argonaute family. Ago subfamily.

Its function is as follows. Probably involved in the RNA silencing pathway. May bind to short RNAs such as microRNAs (miRNAs) or short interfering RNAs (siRNAs), and represses the translation of mRNAs which are complementary to them. The chain is Protein argonaute 11 (AGO11) from Oryza sativa subsp. japonica (Rice).